We begin with the raw amino-acid sequence, 242 residues long: Tryptophan synthase alpha chain (242 aa).

Active-site proton acceptor residues include glutamate 32 and aspartate 43.

The protein belongs to the TrpA family. Tetramer of two alpha and two beta chains.

The protein resides in the plastid. Its subcellular location is the chloroplast. It carries out the reaction (1S,2R)-1-C-(indol-3-yl)glycerol 3-phosphate + L-serine = D-glyceraldehyde 3-phosphate + L-tryptophan + H2O. Its pathway is amino-acid biosynthesis; L-tryptophan biosynthesis; L-tryptophan from chorismate: step 5/5. In terms of biological role, the alpha subunit is responsible for the aldol cleavage of indoleglycerol phosphate to indole and glyceraldehyde 3-phosphate. In Cyanidium caldarium (Red alga), this protein is Tryptophan synthase alpha chain.